Here is a 1320-residue protein sequence, read N- to C-terminus: Sister chromatid cohesion protein PDS5 homolog A (1320 aa).

HEAT repeat units follow at residues 156 to 195 (NEIF…EGDG), 272 to 310 (PLLL…AKDS), 388 to 426 (NLVN…KYCL), 709 to 747 (PQIR…NKEV), and 990 to 1028 (SLLP…CLWF). The segment covering 1158 to 1179 (TFTSETGSNASTNSQPSSPATN) has biased composition (polar residues). A disordered region spans residues 1158-1320 (TFTSETGSNA…APQRQIDLQR (163 aa)). A compositionally biased stretch (basic and acidic residues) spans 1180–1194 (KSRDVSSEVGARENE). Residues 1225–1241 (GTENSVSSNPSAGSQPP) are compositionally biased toward polar residues. Residues 1255–1267 (AGAATQEKEAGAT) show a composition bias toward low complexity. Positions 1283–1293 (QDPSSTASTDA) are enriched in polar residues. Over residues 1294–1309 (LSDKTPKQQKEAEPKR) the composition is skewed to basic and acidic residues.

This sequence belongs to the PDS5 family. Interacts with the cohesin complex. Binds chromatin in a cohesin-dependent manner.

It is found in the nucleus. In terms of biological role, may regulate sister chromatid cohesion during mitosis and couple it to DNA replication. The sequence is that of Sister chromatid cohesion protein PDS5 homolog A from Danio rerio (Zebrafish).